The primary structure comprises 336 residues: MKKWFPALLFSLCVSGESSAWNNIVFYSLGNVNSYQGGNVVITQRPQFITSWRPGIATVTWNQCNGPEFADGSWAYYREYIAWVVFPKKVMTKNGYPLFIEVHNKGSWSEENTGDNDSYFFLKGYKWDERAFDAGNLCQKPGETTRLTEKFNDIIFKVALPADLPLGDYSVTIPYTSGIQRHFASYLGARFKIPYNVAKTLPRENEMLFLFKNIGGCRPSAQSLEIKHGDLSINSANNHYAAQTLSVSCDVPANIRFMLLRNTTPTYSHGKKFSVGLGHGWDSIVSVNGVDTGETTMRWYKAGTQNLTIGSRLYGESSKIQPGVLSGSATLLMILP.

Positions Met1 to Ala20 are cleaved as a signal peptide. 2 disulfide bridges follow: Cys64–Cys138 and Cys217–Cys249. D-galactose contacts are provided by residues Glu79 and Gly124 to Trp127.

The protein belongs to the adhesin PapG family.

Its subcellular location is the secreted. It localises to the fimbrium. Its function is as follows. Tip adhesin component of type P pili that plays a critical role in kidney infection through targeted interaction with the globoseries glycolipids containing the Gal-alpha(1-4)-Gal disaccharide present on uroepithelial cells. In turn, transcriptionally regulates host gene expression in kidney cells, leading to inflammatory pathway activation and renal tissue damage. Acts thereby as key determinant of invasive uropathogenic E.coli (UPEC), which cause pyelonephritis and urinary-source bacteremia. The sequence is that of Fimbrial adhesin PapGII from Escherichia coli O6:H1 (strain CFT073 / ATCC 700928 / UPEC).